The primary structure comprises 420 residues: ATP phosphoribosyltransferase regulatory subunit (420 aa).

This sequence belongs to the class-II aminoacyl-tRNA synthetase family. HisZ subfamily. In terms of assembly, heteromultimer composed of HisG and HisZ subunits.

It is found in the cytoplasm. Its pathway is amino-acid biosynthesis; L-histidine biosynthesis; L-histidine from 5-phospho-alpha-D-ribose 1-diphosphate: step 1/9. Its function is as follows. Required for the first step of histidine biosynthesis. May allow the feedback regulation of ATP phosphoribosyltransferase activity by histidine. This is ATP phosphoribosyltransferase regulatory subunit from Bacillus cereus (strain B4264).